A 250-amino-acid polypeptide reads, in one-letter code: Triosephosphate isomerase (250 aa).

Position 9–11 (9–11 (NWK)) interacts with substrate. H95 (electrophile) is an active-site residue. The active-site Proton acceptor is the E167. Substrate-binding positions include G173, S213, and 234-235 (GG).

This sequence belongs to the triosephosphate isomerase family. Homodimer.

Its subcellular location is the cytoplasm. It catalyses the reaction D-glyceraldehyde 3-phosphate = dihydroxyacetone phosphate. The protein operates within carbohydrate biosynthesis; gluconeogenesis. It participates in carbohydrate degradation; glycolysis; D-glyceraldehyde 3-phosphate from glycerone phosphate: step 1/1. Functionally, involved in the gluconeogenesis. Catalyzes stereospecifically the conversion of dihydroxyacetone phosphate (DHAP) to D-glyceraldehyde-3-phosphate (G3P). In Exiguobacterium sibiricum (strain DSM 17290 / CCUG 55495 / CIP 109462 / JCM 13490 / 255-15), this protein is Triosephosphate isomerase.